The primary structure comprises 1066 residues: FHIP family protein GH13096 (1066 aa).

Over residues 1–15 the composition is skewed to polar residues; that stretch reads MSWLRTSPLRQSLTR. A disordered region spans residues 1–33; it reads MSWLRTSPLRQSLTRNSGGNGSGGSGNSGNASA. A compositionally biased stretch (gly residues) spans 18–27; the sequence is GGNGSGGSGN. Phosphoserine is present on Ser-512. Disordered stretches follow at residues 647 to 688, 827 to 885, and 942 to 1010; these read SFKW…NSSG, DNSP…RSDN, and SRGV…FNSE. Residues 658-687 show a composition bias toward low complexity; the sequence is NDATTTTATSDPDVEHNNSSNHNNSSINSS. Position 829 is a phosphoserine (Ser-829). Residues 836–856 show a composition bias toward low complexity; the sequence is HQQQQLQHTTNSTHQQQQAQQ. Polar residues predominate over residues 950 to 963; it reads PRGNTCETSLSTTP. Residues 967-996 are compositionally biased toward low complexity; it reads AQATSASSTNSSIGGSTQTLSATHSSSTLH. Residues 1001-1010 are compositionally biased toward polar residues; sequence GPQTASFNSE.

This sequence belongs to the FHIP family.

The protein is FHIP family protein GH13096 of Drosophila grimshawi (Hawaiian fruit fly).